The primary structure comprises 283 residues: Daunorubicin resistance ABC transporter permease protein DrrB1 (283 aa).

Residues 53–280 (VQLIDIVLMP…PLTMRLYRNK (228 aa)) form the ABC transmembrane type-2 domain. A run of 6 helical transmembrane segments spans residues 58 to 78 (IVLMPLIFLLMFTYLFGGAFA), 85 to 105 (LQFYLPGVTVQAVVMMTVYTG), 150 to 170 (VFLGLLLGFRADGGFLGVVGA), 171 to 191 (MLVLIVFGFSVSWIFAALGVV), 198 to 218 (VSGTSMIVLYPLLFMSNIFVM), and 252 to 272 (FWDVGLVLCVSAGLVAVFAPL).

The protein belongs to the ABC-2 integral membrane protein family. In terms of assembly, the complex is probably composed of two ATP-binding proteins (DrrA1) and two transmembrane proteins (DrrB1).

The protein localises to the cell membrane. Part of the ABC transporter complex DrrA1B1 involved in daunorubicin efflux. Responsible for the translocation of the substrate across the membrane. Confers self-resistance to daunorubicin, an antibiotic produced by S.coeruleorubidus. The protein is Daunorubicin resistance ABC transporter permease protein DrrB1 of Streptomyces coeruleorubidus.